The sequence spans 390 residues: Lipid-A-disaccharide synthase (390 aa).

It belongs to the LpxB family.

The enzyme catalyses a lipid X + a UDP-2-N,3-O-bis[(3R)-3-hydroxyacyl]-alpha-D-glucosamine = a lipid A disaccharide + UDP + H(+). It participates in bacterial outer membrane biogenesis; LPS lipid A biosynthesis. Its function is as follows. Condensation of UDP-2,3-diacylglucosamine and 2,3-diacylglucosamine-1-phosphate to form lipid A disaccharide, a precursor of lipid A, a phosphorylated glycolipid that anchors the lipopolysaccharide to the outer membrane of the cell. The protein is Lipid-A-disaccharide synthase of Neisseria gonorrhoeae (strain ATCC 700825 / FA 1090).